The chain runs to 670 residues: DNA ligase (670 aa).

Residues 33–37, 82–83, and glutamate 113 each bind NAD(+); these read DAEFD and SL. Lysine 115 serves as the catalytic N6-AMP-lysine intermediate. Residues arginine 136, glutamate 170, lysine 285, and lysine 309 each coordinate NAD(+). Cysteine 403, cysteine 406, cysteine 421, and cysteine 427 together coordinate Zn(2+). The BRCT domain maps to 587–670; that stretch reads EQNLYLSGKT…EVLKAGDNNG (84 aa).

It belongs to the NAD-dependent DNA ligase family. LigA subfamily. It depends on Mg(2+) as a cofactor. The cofactor is Mn(2+).

The catalysed reaction is NAD(+) + (deoxyribonucleotide)n-3'-hydroxyl + 5'-phospho-(deoxyribonucleotide)m = (deoxyribonucleotide)n+m + AMP + beta-nicotinamide D-nucleotide.. DNA ligase that catalyzes the formation of phosphodiester linkages between 5'-phosphoryl and 3'-hydroxyl groups in double-stranded DNA using NAD as a coenzyme and as the energy source for the reaction. It is essential for DNA replication and repair of damaged DNA. This is DNA ligase from Halothermothrix orenii (strain H 168 / OCM 544 / DSM 9562).